The chain runs to 260 residues: UPF0328 protein ECU07_1870/ECU10_0030 (260 aa).

Belongs to the UPF0328 family.

The chain is UPF0328 protein ECU07_1870/ECU10_0030 from Encephalitozoon cuniculi (strain GB-M1) (Microsporidian parasite).